The following is a 439-amino-acid chain: 26S proteasome regulatory subunit 6A (439 aa).

An N-acetylmethionine modification is found at M1. S9 bears the Phosphoserine mark. ATP is bound at residue 227 to 234 (GPPGTGKT). A Phosphoserine modification is found at S376.

It belongs to the AAA ATPase family. In terms of assembly, component of the 19S proteasome regulatory particle complex. The 26S proteasome consists of a 20S core particle (CP) and two 19S regulatory subunits (RP). The regulatory particle is made of a lid composed of 9 subunits, a base containing 6 ATPases including PSMC3 and few additional components. Interacts with PAAF1.

Its subcellular location is the cytoplasm. The protein localises to the nucleus. In terms of biological role, component of the 26S proteasome, a multiprotein complex involved in the ATP-dependent degradation of ubiquitinated proteins. This complex plays a key role in the maintenance of protein homeostasis by removing misfolded or damaged proteins, which could impair cellular functions, and by removing proteins whose functions are no longer required. Therefore, the proteasome participates in numerous cellular processes, including cell cycle progression, apoptosis, or DNA damage repair. PSMC3 belongs to the heterohexameric ring of AAA (ATPases associated with diverse cellular activities) proteins that unfolds ubiquitinated target proteins that are concurrently translocated into a proteolytic chamber and degraded into peptides. The chain is 26S proteasome regulatory subunit 6A (Psmc3) from Rattus norvegicus (Rat).